Consider the following 224-residue polypeptide: Heme response regulator HssR (224 aa).

Residues Gln3–Leu116 enclose the Response regulatory domain. Asp52 is subject to 4-aspartylphosphate. Residues Asn124 to Asn222 constitute a DNA-binding region (ompR/PhoB-type).

In terms of processing, phosphorylated by HssS.

The protein localises to the cytoplasm. Member of the two-component regulatory system HssS/HssR involved in intracellular heme homeostasis and tempering of staphylococcal virulence. Phosphorylated HssR binds to a direct repeat sequence within hrtAB promoter and activates the expression of hrtAB, an efflux pump, in response to extracellular heme, hemin, hemoglobin or blood. This is Heme response regulator HssR (hssR) from Staphylococcus aureus (strain COL).